A 2122-amino-acid polypeptide reads, in one-letter code: Pecanex-like protein 2 (2122 aa).

The next 2 membrane-spanning stretches (helical) occupy residues 36–53 (LYLW…HLAF) and 60–82 (ALFY…YRLH). 2 disordered regions span residues 92-164 (QHRS…ELPA) and 180-250 (QPEA…LVNP). Composition is skewed to polar residues over residues 146–157 (SRGQSVHSQHSS) and 185–203 (ASST…SQGR). N-linked (GlcNAc...) asparagine glycosylation occurs at N288. 2 stretches are compositionally biased toward low complexity: residues 392–407 (VTSS…AESA) and 458–476 (PDRC…PGST). Disordered regions lie at residues 392-556 (VTSS…QIPN) and 575-634 (VVAP…PVFT). The segment covering 528–538 (STKEVVSDGEK) has biased composition (basic and acidic residues). An N-linked (GlcNAc...) asparagine glycan is attached at N556. The span at 599–618 (TKEEAVENEKPNGRDPKPGK) shows a compositional bias: basic and acidic residues. A compositionally biased stretch (polar residues) spans 625–634 (DPANGSPVFT). A run of 13 helical transmembrane segments spans residues 825–845 (VAVL…NRGF), 849–869 (LWVL…LKSV), 882–902 (QIIA…ILLL), 933–953 (HLIV…FPQI), 976–998 (GITS…HAFC), 1010–1030 (HIPA…YHLS), 1080–1100 (LVIC…TVFL), 1105–1125 (FLSI…HHLL), 1174–1194 (YLLY…SISN), 1218–1238 (SFCN…FFHF), 1245–1265 (ESFL…GDLL), 1270–1290 (FVLA…HVFA), and 1305–1325 (TFAT…VIFI). 3 N-linked (GlcNAc...) asparagine glycosylation sites follow: N1393, N1534, and N1802. Disordered regions lie at residues 1858 to 1943 (SVGQ…SSGP) and 1955 to 1991 (STSV…TTGH). Residues 1888 to 1898 (ESRDGSTEQPR) are compositionally biased toward basic and acidic residues. The span at 1922–1942 (SQSVQAHSAISQRPPTLSSSG) shows a compositional bias: polar residues. Over residues 1968-1981 (SRLSLHTSAASLHS) the composition is skewed to low complexity. A glycan (N-linked (GlcNAc...) asparagine) is linked at N2039. Positions 2097 to 2122 (VLCRRASQEDMGLDDTASQQSTSDEQ) are disordered. A compositionally biased stretch (polar residues) spans 2112 to 2122 (TASQQSTSDEQ).

Belongs to the pecanex family.

The protein localises to the membrane. In terms of biological role, may play a role in tumorigenesis. The protein is Pecanex-like protein 2 of Mus musculus (Mouse).